The following is a 357-amino-acid chain: UDP-xylose transporter 3 (357 aa).

Helical transmembrane passes span 7-27 (FQLGTIGALSLSVVSSVSIVI), 31-51 (ALISTLGFTFATTLTSWHLLV), 75-95 (VMGFGILNGISIGLLNLSLGF), 100-120 (FYQMTKLAIIPCTVLLETLFF), 132-152 (LTILLLGVGIATVTDLQLNML), 154-174 (SVLSLLAVVTTCVAQIMTNTI), 194-214 (AITLFVTGPFLDGLLTNQNVF), 224-244 (FFIVLSCLISVSVNFSTFLVI), 250-270 (VTYQVLGHLKTCLVLAFGYVL), and 280-300 (ILGILVAVIGMVVYSYYCSIE). The residue at position 334 (serine 334) is a Phosphoserine.

Belongs to the TPT transporter family. TPT (TC 2.A.7.9) subfamily. Ubiquitous.

The protein localises to the golgi apparatus membrane. Its function is as follows. Nucleotide-sugar transporter that transports UDP-xylose and UMP in a strict counter-exchange mode. The sequence is that of UDP-xylose transporter 3 from Arabidopsis thaliana (Mouse-ear cress).